Here is a 306-residue protein sequence, read N- to C-terminus: Putative S-adenosyl-L-methionine-dependent methyltransferase Mvan_1345 (306 aa).

S-adenosyl-L-methionine contacts are provided by residues Asp-134 and 163 to 164; that span reads DL.

This sequence belongs to the UPF0677 family.

Exhibits S-adenosyl-L-methionine-dependent methyltransferase activity. This chain is Putative S-adenosyl-L-methionine-dependent methyltransferase Mvan_1345, found in Mycolicibacterium vanbaalenii (strain DSM 7251 / JCM 13017 / BCRC 16820 / KCTC 9966 / NRRL B-24157 / PYR-1) (Mycobacterium vanbaalenii).